We begin with the raw amino-acid sequence, 180 residues long: uncharacterized protein (180 aa).

An N-terminal signal peptide occupies residues 1–30 (MRHKIITFILAVVVIIIIGNMIGGGGGSEA). The segment at 25–46 (GGGSEATSKTSSSSKAETEKTY) is disordered. Low complexity predominate over residues 29-39 (EATSKTSSSSK).

It is found in the secreted. This is an uncharacterized protein from Bacillus subtilis (strain 168).